The primary structure comprises 216 residues: 2-hydroxy-3-keto-5-methylthiopentenyl-1-phosphate phosphatase (216 aa).

It belongs to the HAD-like hydrolase superfamily. MtnX family.

It catalyses the reaction 2-hydroxy-5-methylsulfanyl-3-oxopent-1-enyl phosphate + H2O = 1,2-dihydroxy-5-(methylsulfanyl)pent-1-en-3-one + phosphate. It functions in the pathway amino-acid biosynthesis; L-methionine biosynthesis via salvage pathway; L-methionine from S-methyl-5-thio-alpha-D-ribose 1-phosphate: step 4/6. Functionally, dephosphorylates 2-hydroxy-3-keto-5-methylthiopentenyl-1-phosphate (HK-MTPenyl-1-P) yielding 1,2-dihydroxy-3-keto-5-methylthiopentene (DHK-MTPene). The protein is 2-hydroxy-3-keto-5-methylthiopentenyl-1-phosphate phosphatase of Exiguobacterium sp. (strain ATCC BAA-1283 / AT1b).